Consider the following 119-residue polypeptide: Phytosulfokines 2 (119 aa).

Residues 1-34 (MSTTRGVSSSSAAAALALLLLFALCFFSFHSAAA) form the signal peptide. Positions 35-109 (ARAVPRDEHQ…RRLLSDAHLD (75 aa)) are excised as a propeptide. Tyr-110 and Tyr-112 each carry sulfotyrosine. A propeptide spanning residues 115 to 119 (HKNKP) is cleaved from the precursor.

This sequence belongs to the phytosulfokine family. Sulfation is important for activity and for the binding to a putative membrane receptor. Post-translationally, PSK-alpha is produced by endopeptidase digestion. PSK-beta is produced from PSK-alpha by exopeptidase digestion.

The protein localises to the secreted. Functionally, promotes plant cell differentiation, organogenesis and somatic embryogenesis as well as cell proliferation. This Oryza sativa subsp. indica (Rice) protein is Phytosulfokines 2 (PSK2).